Here is a 421-residue protein sequence, read N- to C-terminus: 4-hydroxy-3-methylbut-2-en-1-yl diphosphate synthase (flavodoxin) (421 aa).

Cysteine 298, cysteine 301, cysteine 344, and glutamate 351 together coordinate [4Fe-4S] cluster.

The protein belongs to the IspG family. Requires [4Fe-4S] cluster as cofactor.

The enzyme catalyses (2E)-4-hydroxy-3-methylbut-2-enyl diphosphate + oxidized [flavodoxin] + H2O + 2 H(+) = 2-C-methyl-D-erythritol 2,4-cyclic diphosphate + reduced [flavodoxin]. It participates in isoprenoid biosynthesis; isopentenyl diphosphate biosynthesis via DXP pathway; isopentenyl diphosphate from 1-deoxy-D-xylulose 5-phosphate: step 5/6. Functionally, converts 2C-methyl-D-erythritol 2,4-cyclodiphosphate (ME-2,4cPP) into 1-hydroxy-2-methyl-2-(E)-butenyl 4-diphosphate. The protein is 4-hydroxy-3-methylbut-2-en-1-yl diphosphate synthase (flavodoxin) of Neisseria meningitidis serogroup C (strain 053442).